The following is a 421-amino-acid chain: Serine--tRNA ligase (421 aa).

An L-serine-binding site is contributed by 229–231 (TAE). 260 to 262 (RSE) is a binding site for ATP. Glu-283 is an L-serine binding site. 347-350 (EISS) lines the ATP pocket. Ser-382 provides a ligand contact to L-serine.

This sequence belongs to the class-II aminoacyl-tRNA synthetase family. Type-1 seryl-tRNA synthetase subfamily. As to quaternary structure, homodimer. The tRNA molecule binds across the dimer.

The protein resides in the cytoplasm. The enzyme catalyses tRNA(Ser) + L-serine + ATP = L-seryl-tRNA(Ser) + AMP + diphosphate + H(+). It carries out the reaction tRNA(Sec) + L-serine + ATP = L-seryl-tRNA(Sec) + AMP + diphosphate + H(+). It functions in the pathway aminoacyl-tRNA biosynthesis; selenocysteinyl-tRNA(Sec) biosynthesis; L-seryl-tRNA(Sec) from L-serine and tRNA(Sec): step 1/1. In terms of biological role, catalyzes the attachment of serine to tRNA(Ser). Is also able to aminoacylate tRNA(Sec) with serine, to form the misacylated tRNA L-seryl-tRNA(Sec), which will be further converted into selenocysteinyl-tRNA(Sec). This chain is Serine--tRNA ligase, found in Symbiobacterium thermophilum (strain DSM 24528 / JCM 14929 / IAM 14863 / T).